The chain runs to 335 residues: MTSDGATSTSAAAAAAAMATRRKPSWRERENNRRRERRRRAVAAKIYTGLRAQGNYNLPKHCDNNEVLKALCSEAGWVVEEDGTTYRKGHKPLPGDMAGSSSRATPYSSHNQSPLSSTFDSPILSYQVSPSSSSFPSPSRVGDPHNISTIFPFLRNGGIPSSLPPLRISNSAPVTPPVSSPTSRNPKPLPTWESFTKQSMSMAAKQSMTSLNYPFYAVSAPASPTHHRQFHAPATIPECDESDSSTVDSGHWISFQKFAQQQPFSASMVPTSPTFNLVKPAPQQLSPNTAAIQEIGQSSEFKFENSQVKPWEGERIHDVAMEDLELTLGNGKAHS.

The segment covering 1 to 19 (MTSDGATSTSAAAAAAAMA) has biased composition (low complexity). 3 disordered regions span residues 1–40 (MTSD…RRRR), 85–122 (TYRK…FDSP), and 164–190 (PPLR…KPLP). The required for DNA-binding stretch occupies residues 22–103 (RKPSWREREN…PGDMAGSSSR (82 aa)). The segment covering 99–120 (GSSSRATPYSSHNQSPLSSTFD) has biased composition (polar residues). A Phosphothreonine modification is found at Thr175. Residues 231 to 251 (HAPATIPECDESDSSTVDSGH) are PEST-like.

This sequence belongs to the BZR/LAT61 family. In terms of assembly, interacts with ASK7/BIN2 through its C-terminal domain and with the bHLH transcription factors BIM1, BIM2 and BIM3 through its C- and N-terminal domains. Interacts (via N-terminus) with REF6 and ELF6. Interacts with MYB30. Interacts with IWS1. Interacts with ASHH2/SDG8. Binds to MYB56 when dephosphorylated in the nucleus of quiescent center (QC) cells. Binds to WRKY46, WRKY54 and WRKY70 to cooperatively regulate the expression of target genes. Phosphorylated by ASK7/BIN2. Phosphorylation increases protein degradation and/or interferes with the nuclear localization. Ubiquitously expressed in cotyledons, leaves, hypocotyls and roots.

The protein localises to the nucleus. It is found in the cytoplasm. Positive regulator of brassinosteroid (BR) signaling. Transcription factor that activates target gene expression by binding specifically to the DNA sequence 5'-CANNTG-3'(E box) through its N-terminal domain. Can bind individually to the promoter as a homodimer or synergistically as a heterodimer with BIM1, BIM2 or BIM3. The C-terminal domain is probably involved in transcriptional activation. Recruits the transcription elongation factor IWS1 to control BR-regulated gene expression. Forms a trimeric complex with IWS1 and ASHH2/SDG8 to regulate BR-regulated gene expression. Promotes quiescent center (QC) self-renewal by cell divisions in the primary root. Binds to the E-boxes of the BRAVO promoter to repress its expression. The protein is Protein BRASSINAZOLE-RESISTANT 2 of Arabidopsis thaliana (Mouse-ear cress).